Consider the following 181-residue polypeptide: Oligoribonuclease (181 aa).

Residues 8–171 enclose the Exonuclease domain; sequence LIWIDLEMTG…DDIRESVAEL (164 aa). The active site involves Y129.

It belongs to the oligoribonuclease family.

The protein resides in the cytoplasm. In terms of biological role, 3'-to-5' exoribonuclease specific for small oligoribonucleotides. This Klebsiella pneumoniae subsp. pneumoniae (strain ATCC 700721 / MGH 78578) protein is Oligoribonuclease.